A 234-amino-acid polypeptide reads, in one-letter code: Ribonuclease 3 (234 aa).

Residues 4-133 (LLDLEHKLNY…ILGAVYIDSN (130 aa)) form the RNase III domain. Residue Glu-46 coordinates Mg(2+). The active site involves Asp-50. Asp-119 and Glu-122 together coordinate Mg(2+). Residue Glu-122 is part of the active site. Positions 160–228 (DFKSILQEYV…AKALCIKLGV (69 aa)) constitute a DRBM domain.

The protein belongs to the ribonuclease III family. Homodimer. Mg(2+) is required as a cofactor.

It is found in the cytoplasm. It catalyses the reaction Endonucleolytic cleavage to 5'-phosphomonoester.. In terms of biological role, digests double-stranded RNA. Involved in the processing of primary rRNA transcript to yield the immediate precursors to the large and small rRNAs (23S and 16S). Processes some mRNAs, and tRNAs when they are encoded in the rRNA operon. Processes pre-crRNA and tracrRNA of type II CRISPR loci if present in the organism. The protein is Ribonuclease 3 of Fusobacterium nucleatum subsp. nucleatum (strain ATCC 25586 / DSM 15643 / BCRC 10681 / CIP 101130 / JCM 8532 / KCTC 2640 / LMG 13131 / VPI 4355).